Consider the following 374-residue polypeptide: MLDLTLGVEEEFLLLDPGTLEPAAAADRFRAETDRGEVHRELAPAQIESATAVCRTLEELHHDLSGLRRALAADAAEQGYRLASVGVPPIGSAGPPPVTDSPRYRRMYETYGSIIEDQGVCGCHVHVGALDLETALVAGNHLRPWLPALLLLTTNSPFFRGGDTGYASWRTTLWSRWPAAGPPPVLTSARHYHYVVDCLLASGAVLDSGMLYWYARPSHRVPTLEVRVADAAATVDEAVLLAGLVRGLVGVALSDRPGPVRPVDDAVLRAACWCSAHHGLEGFSLDVGTGRLVPSWHLVDDLVEHVRPVLERYGDLDAVRALLAKLRENGSAARRQREVFRRHRDIGEVVEHVLVETVPDENAALPGRSISPSA.

The protein belongs to the glutamate--cysteine ligase type 2 family. YbdK subfamily.

The enzyme catalyses L-cysteine + L-glutamate + ATP = gamma-L-glutamyl-L-cysteine + ADP + phosphate + H(+). Functionally, ATP-dependent carboxylate-amine ligase which exhibits weak glutamate--cysteine ligase activity. This Saccharopolyspora erythraea (strain ATCC 11635 / DSM 40517 / JCM 4748 / NBRC 13426 / NCIMB 8594 / NRRL 2338) protein is Putative glutamate--cysteine ligase 2-1.